Consider the following 75-residue polypeptide: Small ribosomal subunit protein bS18c (75 aa).

Belongs to the bacterial ribosomal protein bS18 family. As to quaternary structure, part of the 30S ribosomal subunit.

It is found in the plastid. The protein localises to the chloroplast. The chain is Small ribosomal subunit protein bS18c from Adiantum capillus-veneris (Maidenhair fern).